The chain runs to 161 residues: Phosphopantetheine adenylyltransferase (161 aa).

Ser9 is a substrate binding site. Residues 9 to 10 (SF) and His17 contribute to the ATP site. The substrate site is built by Lys41, Leu73, and Lys87. ATP contacts are provided by residues 88–90 (GLR), Glu98, and 122–128 (FSFLSSS).

Belongs to the bacterial CoaD family. Homohexamer. Mg(2+) serves as cofactor.

The protein localises to the cytoplasm. The catalysed reaction is (R)-4'-phosphopantetheine + ATP + H(+) = 3'-dephospho-CoA + diphosphate. It participates in cofactor biosynthesis; coenzyme A biosynthesis; CoA from (R)-pantothenate: step 4/5. In terms of biological role, reversibly transfers an adenylyl group from ATP to 4'-phosphopantetheine, yielding dephospho-CoA (dPCoA) and pyrophosphate. The protein is Phosphopantetheine adenylyltransferase of Nocardia farcinica (strain IFM 10152).